The sequence spans 333 residues: Probable tRNA pseudouridine synthase B (333 aa).

Asp-66 (nucleophile) is an active-site residue. The PUA domain maps to 233–308; that stretch reads LKKIIVKDSA…EVVEITRVIM (76 aa).

Belongs to the pseudouridine synthase TruB family. Type 2 subfamily.

It carries out the reaction uridine(55) in tRNA = pseudouridine(55) in tRNA. Could be responsible for synthesis of pseudouridine from uracil-55 in the psi GC loop of transfer RNAs. The protein is Probable tRNA pseudouridine synthase B of Methanococcus maripaludis (strain C6 / ATCC BAA-1332).